The primary structure comprises 206 residues: Ribosomal RNA small subunit methyltransferase G (206 aa).

Residues Gly-73, Leu-78, 124 to 125 (VE), and Arg-139 contribute to the S-adenosyl-L-methionine site.

It belongs to the methyltransferase superfamily. RNA methyltransferase RsmG family.

It is found in the cytoplasm. The enzyme catalyses guanosine(527) in 16S rRNA + S-adenosyl-L-methionine = N(7)-methylguanosine(527) in 16S rRNA + S-adenosyl-L-homocysteine. Functionally, specifically methylates the N7 position of guanine in position 527 of 16S rRNA. This is Ribosomal RNA small subunit methyltransferase G from Pectobacterium carotovorum subsp. carotovorum (strain PC1).